Consider the following 841-residue polypeptide: Translation initiation factor IF-2 (841 aa).

Residues 94–255 (QRSPEEIEAE…RNAHGFQSPT (162 aa)) are disordered. Residues 96 to 135 (SPEEIEAERKREMDERRAVENAARQKAEEEAKRRAEEDAR) are compositionally biased toward basic and acidic residues. Over residues 136–175 (NQPAAGQPASAPAQPVAAAEPVREAPAAAAPAPASAAPSA) the composition is skewed to low complexity. Basic and acidic residues-rich tracts occupy residues 176–217 (DARK…EKAP) and 225–234 (TTDEESDSFR). The segment covering 235 to 248 (RGGRGKGKLKKRNA) has biased composition (basic residues). The region spanning 341–510 (SRAPVVTVMG…LLQAEVLELK (170 aa)) is the tr-type G domain. The G1 stretch occupies residues 350–357 (GHVDHGKT). A GTP-binding site is contributed by 350–357 (GHVDHGKT). The segment at 375–379 (GITQH) is G2. Positions 396–399 (DTPG) are G3. GTP contacts are provided by residues 396–400 (DTPGH) and 450–453 (NKID). Positions 450-453 (NKID) are G4. The tract at residues 486-488 (SAK) is G5.

This sequence belongs to the TRAFAC class translation factor GTPase superfamily. Classic translation factor GTPase family. IF-2 subfamily.

It is found in the cytoplasm. Functionally, one of the essential components for the initiation of protein synthesis. Protects formylmethionyl-tRNA from spontaneous hydrolysis and promotes its binding to the 30S ribosomal subunits. Also involved in the hydrolysis of GTP during the formation of the 70S ribosomal complex. This is Translation initiation factor IF-2 from Pseudomonas syringae pv. tomato (strain ATCC BAA-871 / DC3000).